The following is a 377-amino-acid chain: Chaperone protein DnaJ (377 aa).

One can recognise a J domain in the interval 4-69; it reads DYYEALGVTR…QKRAAYDRFG (66 aa). The CR-type zinc-finger motif lies at 135-213; that stretch reads GKTAQIRVPT…CHGQGRVTQE (79 aa). 8 residues coordinate Zn(2+): cysteine 148, cysteine 151, cysteine 165, cysteine 168, cysteine 187, cysteine 190, cysteine 201, and cysteine 204. CXXCXGXG motif repeat units follow at residues 148–155, 165–172, 187–194, and 201–208; these read CDECSGSG, CTMCSGSG, CPGCNGRG, and CEKCHGQG.

The protein belongs to the DnaJ family. Homodimer. It depends on Zn(2+) as a cofactor.

Its subcellular location is the cytoplasm. In terms of biological role, participates actively in the response to hyperosmotic and heat shock by preventing the aggregation of stress-denatured proteins and by disaggregating proteins, also in an autonomous, DnaK-independent fashion. Unfolded proteins bind initially to DnaJ; upon interaction with the DnaJ-bound protein, DnaK hydrolyzes its bound ATP, resulting in the formation of a stable complex. GrpE releases ADP from DnaK; ATP binding to DnaK triggers the release of the substrate protein, thus completing the reaction cycle. Several rounds of ATP-dependent interactions between DnaJ, DnaK and GrpE are required for fully efficient folding. Also involved, together with DnaK and GrpE, in the DNA replication of plasmids through activation of initiation proteins. The sequence is that of Chaperone protein DnaJ from Brucella canis (strain ATCC 23365 / NCTC 10854 / RM-666).